The following is a 256-amino-acid chain: Peroxisomal membrane protein PMP30A (256 aa).

The protein belongs to the peroxin-11 family.

It localises to the peroxisome membrane. Its function is as follows. Involved in peroxisomal proliferation. Could participate in peroxisomal elongation or fission. May be involved in parceling of peroxisomes into regular quanta. The sequence is that of Peroxisomal membrane protein PMP30A (PEX11A) from Candida boidinii (Yeast).